Reading from the N-terminus, the 264-residue chain is MSDILDKIIAVKREEIAQAIKRKPLAVVREDAESRVLTRDFVGALRAKISAGKPAVIAEVKKASPSKGVLRADFIPADIAQSYAEHGAACLSVLTDRQFFQGSVDYLKQARASCALPVLRKDFMVDAYQVYEARVMGADCILLIVACLDDAQMKALEALAFSLDMAVLVEVHDEAELERALKLRTPLVGINNRNLKTFEVSLDNTLSLLGKVPADRLLVTESGISTPADVKRLREARVNAFLVGEAFMRAEDPGVALAQLFGLD.

The protein belongs to the TrpC family.

The catalysed reaction is 1-(2-carboxyphenylamino)-1-deoxy-D-ribulose 5-phosphate + H(+) = (1S,2R)-1-C-(indol-3-yl)glycerol 3-phosphate + CO2 + H2O. Its pathway is amino-acid biosynthesis; L-tryptophan biosynthesis; L-tryptophan from chorismate: step 4/5. In Polaromonas sp. (strain JS666 / ATCC BAA-500), this protein is Indole-3-glycerol phosphate synthase.